The sequence spans 416 residues: Imidazolonepropionase (416 aa).

2 residues coordinate Fe(3+): His81 and His83. Residues His81 and His83 each coordinate Zn(2+). Positions 90, 153, and 186 each coordinate 4-imidazolone-5-propanoate. Residue Tyr153 coordinates N-formimidoyl-L-glutamate. His251 provides a ligand contact to Fe(3+). His251 contributes to the Zn(2+) binding site. Gln254 is a 4-imidazolone-5-propanoate binding site. Asp326 provides a ligand contact to Fe(3+). Residue Asp326 participates in Zn(2+) binding. 2 residues coordinate N-formimidoyl-L-glutamate: Asn328 and Gly330. Residue Thr331 participates in 4-imidazolone-5-propanoate binding.

The protein belongs to the metallo-dependent hydrolases superfamily. HutI family. The cofactor is Zn(2+). Fe(3+) serves as cofactor.

The protein resides in the cytoplasm. It carries out the reaction 4-imidazolone-5-propanoate + H2O = N-formimidoyl-L-glutamate. Its pathway is amino-acid degradation; L-histidine degradation into L-glutamate; N-formimidoyl-L-glutamate from L-histidine: step 3/3. Catalyzes the hydrolytic cleavage of the carbon-nitrogen bond in imidazolone-5-propanoate to yield N-formimidoyl-L-glutamate. It is the third step in the universal histidine degradation pathway. This Paracidovorax citrulli (strain AAC00-1) (Acidovorax citrulli) protein is Imidazolonepropionase.